The sequence spans 243 residues: Tetraspanin-36 (243 aa).

The Cytoplasmic portion of the chain corresponds to 1 to 9; that stretch reads MDCGIITSK. Residues 10-30 traverse the membrane as a helical segment; that stretch reads TILLLLSLIFWAAGAALAYVG. The Lumenal portion of the chain corresponds to 31-49; sequence SYVIKSYNNFEDFMSDRHT. The chain crosses the membrane as a helical span at residues 50–70; it reads LIPAAIIIGVAVVMFIIGFVG. Topologically, residues 71 to 84 are cytoplasmic; that stretch reads CCATLRESKVGLGL. The chain crosses the membrane as a helical span at residues 85–105; sequence FLIIIMLIFAAEVTAFVFGII. Residues 106 to 208 lie on the Lumenal side of the membrane; it reads YRGRIRGDLE…QVLQDVLSYA (103 aa). 3 N-linked (GlcNAc...) asparagine glycosylation sites follow: Asn-149, Asn-163, and Asn-174. The chain crosses the membrane as a helical span at residues 209–229; sequence MLVILGFAIIKFFGMLSVCVI. The Cytoplasmic portion of the chain corresponds to 230-243; that stretch reads TCKSKKNEYQPLYA.

The protein belongs to the tetraspanin (TM4SF) family. In terms of processing, N-glycosylated. In terms of tissue distribution, strongly expressed in melanophores and xanthophores. Also detected in eye, brain, heart, skin, fin, testis and ovary.

The protein localises to the golgi apparatus membrane. Its subcellular location is the endoplasmic reticulum membrane. Functionally, plays a role in migration and segregation of pigment cells (melanophores and xanthophores). Contributes to pigment stripe patterning in the epidermis. The protein is Tetraspanin-36 of Danio rerio (Zebrafish).